A 312-amino-acid chain; its full sequence is MTTAPCVPNASSVARLSGRIQAGIPLAPLTTFRVGGKAEWYCEPHNNLELQQCLAWARAQGIPVTLLGAGSNLLISDAGLPGLVIHTRRLRGMQLLEGGRIWAAAGEPLVNLARAAAKRGWSGLEWAIGIPGTLGGAVVMNAGAHGRAMSDVLVEVQILDEEQEPCRLEPVDLQFGYRRSRLQDSPWTVTGATLQLLPGRDPAQVQRQTQRHLNQRLSSQPYHLPSCGSVFRNPETHPAGWLIEQVGLKGYRIGGAQISERHANFILNCGQASANDIYRLICLAQEKVYQRWSIFLEPEVRILGSFDDPLIS.

One can recognise an FAD-binding PCMH-type domain in the interval 33–199; sequence RVGGKAEWYC…TGATLQLLPG (167 aa). R178 is an active-site residue. S229 serves as the catalytic Proton donor. E299 is an active-site residue.

The protein belongs to the MurB family. FAD is required as a cofactor.

The protein localises to the cytoplasm. The catalysed reaction is UDP-N-acetyl-alpha-D-muramate + NADP(+) = UDP-N-acetyl-3-O-(1-carboxyvinyl)-alpha-D-glucosamine + NADPH + H(+). It participates in cell wall biogenesis; peptidoglycan biosynthesis. Its function is as follows. Cell wall formation. This Synechococcus sp. (strain JA-3-3Ab) (Cyanobacteria bacterium Yellowstone A-Prime) protein is UDP-N-acetylenolpyruvoylglucosamine reductase.